The primary structure comprises 241 residues: ATP-dependent Clp protease ATP-binding subunit CLPT2, chloroplastic (241 aa).

A chloroplast-targeting transit peptide spans 1 to 75; that stretch reads MAAHSSCNFA…PRRIHKSAIS (75 aa). The Clp R domain occupies 91 to 237; that stretch reads KPKWSWRAIK…ELESFASESG (147 aa). 2 repeat regions span residues 94 to 159 and 171 to 237; these read WSWR…LGKA and LTED…SESG.

Belongs to the ClpA/ClpB family. Monomer and homodimer. The dimers monomerize before association to the P-ring. Component of the chloroplastic Clp protease core complex which consist of at least 16 proteins: CLPP4 (3 copies), CLPP5 (3 copies), CLPR4 (2 copies), ClpP1 (1 copy), CLPP6 (1 copy), CLPR2 (1 copy), CLPT1 (1 copy), CLPT2 (1 copy) and 3 copies of CLPP3 and/or CLPR1 and/or CLPR3. Interacts with AHK2. Interacts with CPN21. No interactions with CLPS1.

It is found in the plastid. Its subcellular location is the chloroplast. Its function is as follows. Accessory protein regulating the assembly of the plastidial Clp protease system. CLPT1 first binds to the heptameric P-ring containing the CLP3-6 subunits followed by CLPT2, and only then does the P-ring combine with the R-ring composed of the clpP1 and CLPR1-4 subunits. Once the core complex is fully assembled, it then associates to the CLPC chaperone partner to form the functional protease. CLPT2 and CLPT1 are partially redundant. In Arabidopsis thaliana (Mouse-ear cress), this protein is ATP-dependent Clp protease ATP-binding subunit CLPT2, chloroplastic.